The chain runs to 298 residues: Protoheme IX farnesyltransferase (298 aa).

Transmembrane regions (helical) follow at residues 16–36, 45–65, 93–113, 114–134, 141–161, 172–192, 223–243, 244–264, and 277–297; these read VVAL…PDMP, ALGF…NQLL, VFAG…VNVI, TAVL…VYLK, IVIG…AVTG, SLLV…LAIF, VLLA…VFYL, GGAI…LNPP, and IVYL…LPWV.

This sequence belongs to the UbiA prenyltransferase family. Protoheme IX farnesyltransferase subfamily.

The protein resides in the cell inner membrane. The catalysed reaction is heme b + (2E,6E)-farnesyl diphosphate + H2O = Fe(II)-heme o + diphosphate. The protein operates within porphyrin-containing compound metabolism; heme O biosynthesis; heme O from protoheme: step 1/1. Functionally, converts heme B (protoheme IX) to heme O by substitution of the vinyl group on carbon 2 of heme B porphyrin ring with a hydroxyethyl farnesyl side group. This chain is Protoheme IX farnesyltransferase, found in Xanthomonas euvesicatoria pv. vesicatoria (strain 85-10) (Xanthomonas campestris pv. vesicatoria).